We begin with the raw amino-acid sequence, 231 residues long: A-type ATP synthase subunit D (231 aa).

Belongs to the V-ATPase D subunit family. As to quaternary structure, has multiple subunits with at least A(3), B(3), C, D, E, F, H, I and proteolipid K(x).

It localises to the cell membrane. Functionally, component of the A-type ATP synthase that produces ATP from ADP in the presence of a proton gradient across the membrane. In Methanobrevibacter smithii (strain ATCC 35061 / DSM 861 / OCM 144 / PS), this protein is A-type ATP synthase subunit D.